A 291-amino-acid chain; its full sequence is uncharacterized protein (291 aa).

The next 4 helical transmembrane spans lie at 13–33 (IILI…SITI), 84–104 (IVLF…IGII), 111–131 (LLHL…FIII), and 219–239 (LIYC…IYYL).

The protein localises to the cell membrane. This is an uncharacterized protein from Ureaplasma parvum serovar 3 (strain ATCC 700970).